Here is a 223-residue protein sequence, read N- to C-terminus: Serine/threonine/tyrosine-interacting protein B (223 aa).

The region spanning 28–176 is the Tyrosine-protein phosphatase domain; it reads EMQEILPGLF…LQEYEAIYLA (149 aa).

Belongs to the protein-tyrosine phosphatase family. Non-receptor class subfamily.

Functionally, catalytically inactive phosphatase. The protein is Serine/threonine/tyrosine-interacting protein B (styx-b) of Xenopus laevis (African clawed frog).